The sequence spans 81 residues: ATP synthase subunit c, chloroplastic (81 aa).

2 consecutive transmembrane segments (helical) span residues 4–24 and 57–77; these read VISA…SIGP and LAFM…LLFA.

The protein belongs to the ATPase C chain family. F-type ATPases have 2 components, F(1) - the catalytic core - and F(0) - the membrane proton channel. F(1) has five subunits: alpha(3), beta(3), gamma(1), delta(1), epsilon(1). F(0) has four main subunits: a(1), b(1), b'(1) and c(10-14). The alpha and beta chains form an alternating ring which encloses part of the gamma chain. F(1) is attached to F(0) by a central stalk formed by the gamma and epsilon chains, while a peripheral stalk is formed by the delta, b and b' chains.

The protein resides in the plastid. It is found in the chloroplast thylakoid membrane. In terms of biological role, f(1)F(0) ATP synthase produces ATP from ADP in the presence of a proton or sodium gradient. F-type ATPases consist of two structural domains, F(1) containing the extramembraneous catalytic core and F(0) containing the membrane proton channel, linked together by a central stalk and a peripheral stalk. During catalysis, ATP synthesis in the catalytic domain of F(1) is coupled via a rotary mechanism of the central stalk subunits to proton translocation. Functionally, key component of the F(0) channel; it plays a direct role in translocation across the membrane. A homomeric c-ring of between 10-14 subunits forms the central stalk rotor element with the F(1) delta and epsilon subunits. This is ATP synthase subunit c, chloroplastic from Zygnema circumcarinatum (Green alga).